Here is a 357-residue protein sequence, read N- to C-terminus: tRNA-specific 2-thiouridylase MnmA (357 aa).

Residues 8-15 and I34 contribute to the ATP site; that span reads GISGGVDS. Catalysis depends on C96, which acts as the Nucleophile. A disulfide bridge connects residues C96 and C192. G120 provides a ligand contact to ATP. Residues 142–144 form an interaction with tRNA region; it reads KDQ. The active-site Cysteine persulfide intermediate is the C192. The interaction with tRNA stretch occupies residues 301 to 302; that stretch reads RY.

Belongs to the MnmA/TRMU family.

The protein localises to the cytoplasm. The catalysed reaction is S-sulfanyl-L-cysteinyl-[protein] + uridine(34) in tRNA + AH2 + ATP = 2-thiouridine(34) in tRNA + L-cysteinyl-[protein] + A + AMP + diphosphate + H(+). Functionally, catalyzes the 2-thiolation of uridine at the wobble position (U34) of tRNA, leading to the formation of s(2)U34. This Chlorobium phaeobacteroides (strain DSM 266 / SMG 266 / 2430) protein is tRNA-specific 2-thiouridylase MnmA.